The chain runs to 262 residues: Small ribosomal subunit protein eS4A (262 aa).

Residues 42–105 (LPLIVFLRNR…GEHFRLVYDI (64 aa)) enclose the S4 RNA-binding domain.

Belongs to the eukaryotic ribosomal protein eS4 family. As to quaternary structure, component of the small ribosomal subunit (SSU). Mature yeast ribosomes consist of a small (40S) and a large (60S) subunit. The 40S small subunit contains 1 molecule of ribosomal RNA (18S rRNA) and at least 33 different proteins. The large 60S subunit contains 3 rRNA molecules (25S, 5.8S and 5S rRNA) and at least 46 different proteins.

It localises to the cytoplasm. Functionally, component of the ribosome, a large ribonucleoprotein complex responsible for the synthesis of proteins in the cell. The small ribosomal subunit (SSU) binds messenger RNAs (mRNAs) and translates the encoded message by selecting cognate aminoacyl-transfer RNA (tRNA) molecules. The large subunit (LSU) contains the ribosomal catalytic site termed the peptidyl transferase center (PTC), which catalyzes the formation of peptide bonds, thereby polymerizing the amino acids delivered by tRNAs into a polypeptide chain. The nascent polypeptides leave the ribosome through a tunnel in the LSU and interact with protein factors that function in enzymatic processing, targeting, and the membrane insertion of nascent chains at the exit of the ribosomal tunnel. In Schizosaccharomyces pombe (strain 972 / ATCC 24843) (Fission yeast), this protein is Small ribosomal subunit protein eS4A (rps401).